Reading from the N-terminus, the 232-residue chain is Probable caffeoyl-CoA O-methyltransferase At4g26220 (232 aa).

Residue lysine 7 participates in substrate binding. Residues threonine 49, glutamate 71, 73-74 (GV), serine 79, aspartate 97, and alanine 126 contribute to the S-adenosyl-L-methionine site. Residue aspartate 149 coordinates substrate. Aspartate 149 serves as a coordination point for a divalent metal cation. Aspartate 151 is an S-adenosyl-L-methionine binding site. Positions 175 and 176 each coordinate a divalent metal cation.

The protein belongs to the class I-like SAM-binding methyltransferase superfamily. Cation-dependent O-methyltransferase family. CCoAMT subfamily. A divalent metal cation serves as cofactor.

The enzyme catalyses (E)-caffeoyl-CoA + S-adenosyl-L-methionine = (E)-feruloyl-CoA + S-adenosyl-L-homocysteine + H(+). It functions in the pathway aromatic compound metabolism; phenylpropanoid biosynthesis. Functionally, methylates caffeoyl-CoA to feruloyl-CoA and 5-hydroxyferuloyl-CoA to sinapoyl-CoA. Plays a role in the synthesis of feruloylated polysaccharides. Involved in the reinforcement of the plant cell wall. Also involved in the responding to wounding or pathogen challenge by the increased formation of cell wall-bound ferulic acid polymers. This Arabidopsis thaliana (Mouse-ear cress) protein is Probable caffeoyl-CoA O-methyltransferase At4g26220.